A 190-amino-acid chain; its full sequence is dCTP deaminase (190 aa).

A dCTP-binding site is contributed by 113-118 (KSTYAR). Glutamate 139 (proton donor/acceptor) is an active-site residue. Positions 158, 172, 181, and 182 each coordinate dCTP.

The protein belongs to the dCTP deaminase family. In terms of assembly, homotrimer.

It catalyses the reaction dCTP + H2O + H(+) = dUTP + NH4(+). It functions in the pathway pyrimidine metabolism; dUMP biosynthesis; dUMP from dCTP (dUTP route): step 1/2. Functionally, catalyzes the deamination of dCTP to dUTP. The sequence is that of dCTP deaminase from Chlamydia pneumoniae (Chlamydophila pneumoniae).